The primary structure comprises 423 residues: Ribosome biogenesis protein WDR12 homolog (423 aa).

Positions 10 to 93 are ubiquitin-like (UBL) domain; sequence VQVHLKTKQE…EDAIEIEYVE (84 aa). 7 WD repeats span residues 105-142, 144-186, 193-232, 253-291, 293-332, 338-378, and 382-420; these read LHDD…ILTI, GHTA…NAVE, GHER…AGGD, GHRE…IKTE, STNK…GSIV, GHNA…APLY, and GHGE…VETM.

The protein belongs to the WD repeat WDR12/YTM1 family.

It localises to the nucleus. The protein resides in the nucleolus. The protein localises to the nucleoplasm. In terms of biological role, required for maturation of ribosomal RNAs and formation of the large ribosomal subunit. This is Ribosome biogenesis protein WDR12 homolog from Drosophila willistoni (Fruit fly).